The sequence spans 596 residues: Serine/threonine-protein kinase PknH (596 aa).

Residues 1–373 (MSDAQDSRVG…QTPRKTNPWP (373 aa)) are Cytoplasmic-facing. The 261-residue stretch at 16-276 (YHLKRLLGRG…DLALAAHEAL (261 aa)) folds into the Protein kinase domain. ATP is bound by residues 22–30 (LGRGGMGEV) and K45. D139 (proton acceptor) is an active-site residue. T170 carries the phosphothreonine modification. Residues 292 to 368 (QESTLPGTAA…PSPWAQTPRK (77 aa)) are disordered. The segment covering 307–318 (PTMPTVTPPPIQ) has biased composition (pro residues). The chain crosses the membrane as a helical span at residues 374–394 (LVAGAAAVVLVLVLGAIGIWI). The Extracellular portion of the chain corresponds to 395-596 (ANRPKPVQPP…AKIVDKVNKE (202 aa)).

It belongs to the protein kinase superfamily. Ser/Thr protein kinase family. Post-translationally, autophosphorylated on threonine and serine residues.

Its subcellular location is the cell membrane. The enzyme catalyses L-seryl-[protein] + ATP = O-phospho-L-seryl-[protein] + ADP + H(+). It carries out the reaction L-threonyl-[protein] + ATP = O-phospho-L-threonyl-[protein] + ADP + H(+). In Mycobacterium bovis (strain ATCC BAA-935 / AF2122/97), this protein is Serine/threonine-protein kinase PknH (pknH).